The following is a 72-amino-acid chain: Alpha-elapitoxin-Dpp2d (72 aa).

5 disulfide bridges follow: cysteine 3–cysteine 21, cysteine 14–cysteine 42, cysteine 27–cysteine 31, cysteine 46–cysteine 57, and cysteine 58–cysteine 63. Arginine 72 carries the post-translational modification Arginine amide.

This sequence belongs to the three-finger toxin family. Long-chain subfamily. Type II alpha-neurotoxin sub-subfamily. As to quaternary structure, monomer (predominant). In terms of processing, amidation does not significantly affect toxin selectivity, since the activity profile and binding data are reminiscent of classical long-chain 3-finger toxins with a free carboxyl termini. Expressed by the venom gland.

Its subcellular location is the secreted. Its function is as follows. Binds with high affinity to muscular (IC(50)=114 nM) and neuronal (alpha-7/CHRNA7) (IC(50)=58 nM) nicotinic acetylcholine receptor (nAChR) and inhibits acetylcholine from binding to the receptor, thereby impairing neuromuscular and neuronal transmission. Competitive radioligand binding assays also demonstrate that this toxin competes with epibatidine binding to the Lymnaea stagnalis acetylcholine-binding protein (Ls-AChBP) (IC(50)=4.9 nM). This is Alpha-elapitoxin-Dpp2d from Dendroaspis polylepis polylepis (Black mamba).